The following is a 217-amino-acid chain: Killer cell lectin-like receptor subfamily B member 1F (217 aa).

The Cytoplasmic portion of the chain corresponds to 1-45; sequence MDTSKVHGNVKPFRCPGYKQASSPSFSPDACRCPHWHHLALKSGC. An LCK-binding motif motif is present at residues 31-34; it reads CRCP. The chain crosses the membrane as a helical; Signal-anchor for type II membrane protein span at residues 46–66; that stretch reads AGLILLLLSLIGLSVLVRFLV. At 67–217 the chain is on the extracellular side; that stretch reads QKPPIEKCSV…WICQKTLIHV (151 aa). N-linked (GlcNAc...) asparagine glycosylation is present at Asn-81. In terms of domain architecture, C-type lectin spans 101-211; sequence HWNKCLFVSQ…CSSDNHWICQ (111 aa). 2 disulfides stabilise this stretch: Cys-122–Cys-210 and Cys-189–Cys-202.

Highly expressed in dendritic cells. Detectable in natural killer cells.

It localises to the membrane. Binds CLEC2I/Clr-g leading to activation of natural killer cells or costimulation of IL-2 production and proliferation of T-cells in response to antigen stimulation. May contribute to the formation of the immunological synapse between T-cells and antigen-presenting dendritic cells. This chain is Killer cell lectin-like receptor subfamily B member 1F (Klrb1f), found in Mus musculus (Mouse).